A 313-amino-acid polypeptide reads, in one-letter code: Nucleotide-binding protein Swit_0399 (313 aa).

ATP is bound at residue 20–27 (GMSGSGKK). 73–76 (DSRT) contacts GTP. A disordered region spans residues 289–313 (PTVRHRDLTRQKSNAEESTVPGVGS). Residues 292-303 (RHRDLTRQKSNA) show a composition bias toward basic and acidic residues.

It belongs to the RapZ-like family.

Displays ATPase and GTPase activities. The chain is Nucleotide-binding protein Swit_0399 from Rhizorhabdus wittichii (strain DSM 6014 / CCUG 31198 / JCM 15750 / NBRC 105917 / EY 4224 / RW1) (Sphingomonas wittichii).